The primary structure comprises 360 residues: Outer membrane protein P2 (360 aa).

Residues Met-1 to Ala-20 form the signal peptide.

Belongs to the Gram-negative porin family. As to quaternary structure, homotrimer.

The protein resides in the cell outer membrane. Functionally, forms pores that allow passive diffusion of small molecules across the outer membrane. The protein is Outer membrane protein P2 (ompP2) of Haemophilus influenzae.